An 83-amino-acid chain; its full sequence is UPF0512 protein G (83 aa).

This sequence belongs to the UPF0512 family.

The protein is UPF0512 protein G of Dictyostelium discoideum (Social amoeba).